The sequence spans 262 residues: Adenosylcobinamide-GDP ribazoletransferase (262 aa).

Helical transmembrane passes span 4–21 (AWSG…IPIR), 37–57 (AFPL…FIFS), 62–82 (LSPL…AGGL), 112–132 (VGAF…LFVF), 141–161 (IFLI…LLIY), 181–201 (YDAH…CAIH), 202–222 (FSVW…VFVA), and 236–256 (DALG…IWLL).

It belongs to the CobS family. It depends on Mg(2+) as a cofactor.

It localises to the cell membrane. It carries out the reaction alpha-ribazole + adenosylcob(III)inamide-GDP = adenosylcob(III)alamin + GMP + H(+). It catalyses the reaction alpha-ribazole 5'-phosphate + adenosylcob(III)inamide-GDP = adenosylcob(III)alamin 5'-phosphate + GMP + H(+). Its pathway is cofactor biosynthesis; adenosylcobalamin biosynthesis; adenosylcobalamin from cob(II)yrinate a,c-diamide: step 7/7. Its function is as follows. Joins adenosylcobinamide-GDP and alpha-ribazole to generate adenosylcobalamin (Ado-cobalamin). Also synthesizes adenosylcobalamin 5'-phosphate from adenosylcobinamide-GDP and alpha-ribazole 5'-phosphate. This chain is Adenosylcobinamide-GDP ribazoletransferase, found in Geobacillus sp. (strain WCH70).